We begin with the raw amino-acid sequence, 413 residues long: Gamma-glutamyl phosphate reductase (413 aa).

The protein belongs to the gamma-glutamyl phosphate reductase family.

It is found in the cytoplasm. The catalysed reaction is L-glutamate 5-semialdehyde + phosphate + NADP(+) = L-glutamyl 5-phosphate + NADPH + H(+). It functions in the pathway amino-acid biosynthesis; L-proline biosynthesis; L-glutamate 5-semialdehyde from L-glutamate: step 2/2. In terms of biological role, catalyzes the NADPH-dependent reduction of L-glutamate 5-phosphate into L-glutamate 5-semialdehyde and phosphate. The product spontaneously undergoes cyclization to form 1-pyrroline-5-carboxylate. The polypeptide is Gamma-glutamyl phosphate reductase (Caulobacter vibrioides (strain ATCC 19089 / CIP 103742 / CB 15) (Caulobacter crescentus)).